A 497-amino-acid chain; its full sequence is Cytochrome P450 monooxygenase 151 (497 aa).

The helical transmembrane segment at Met1 to Tyr21 threads the bilayer. 2 N-linked (GlcNAc...) asparagine glycosylation sites follow: Asn292 and Asn397. Cys441 provides a ligand contact to heme.

The protein belongs to the cytochrome P450 family. Heme is required as a cofactor.

It localises to the membrane. Its pathway is secondary metabolite biosynthesis. Its function is as follows. Cytochrome P450 monooxygenase that is able to use dehydroabietic acid and testosterone as substrates for oxidation, suggesting that the natural substrate(s) may be structurally related to steroid compounds. In Postia placenta (strain ATCC 44394 / Madison 698-R) (Brown rot fungus), this protein is Cytochrome P450 monooxygenase 151.